A 173-amino-acid chain; its full sequence is Crossover junction endodeoxyribonuclease RuvC (173 aa).

Catalysis depends on residues Asp11, Glu71, and Asp143. Mg(2+)-binding residues include Asp11, Glu71, and Asp143.

It belongs to the RuvC family. Homodimer which binds Holliday junction (HJ) DNA. The HJ becomes 2-fold symmetrical on binding to RuvC with unstacked arms; it has a different conformation from HJ DNA in complex with RuvA. In the full resolvosome a probable DNA-RuvA(4)-RuvB(12)-RuvC(2) complex forms which resolves the HJ. The cofactor is Mg(2+).

It is found in the cytoplasm. It catalyses the reaction Endonucleolytic cleavage at a junction such as a reciprocal single-stranded crossover between two homologous DNA duplexes (Holliday junction).. In terms of biological role, the RuvA-RuvB-RuvC complex processes Holliday junction (HJ) DNA during genetic recombination and DNA repair. Endonuclease that resolves HJ intermediates. Cleaves cruciform DNA by making single-stranded nicks across the HJ at symmetrical positions within the homologous arms, yielding a 5'-phosphate and a 3'-hydroxyl group; requires a central core of homology in the junction. The consensus cleavage sequence is 5'-(A/T)TT(C/G)-3'. Cleavage occurs on the 3'-side of the TT dinucleotide at the point of strand exchange. HJ branch migration catalyzed by RuvA-RuvB allows RuvC to scan DNA until it finds its consensus sequence, where it cleaves and resolves the cruciform DNA. This Brucella abortus (strain 2308) protein is Crossover junction endodeoxyribonuclease RuvC.